Consider the following 123-residue polypeptide: MSNNFKRTDRIAEMIQRKLALIIPQEIKDPRLKGFVTISAVKVAADLGHAKIYFTVLNEDKSVVTNILNGAASYLRSALARSITLRTVPQLHFIYDESIEYGQRLSRLIDEVNPPDSSSDDNN.

This sequence belongs to the RbfA family. In terms of assembly, monomer. Binds 30S ribosomal subunits, but not 50S ribosomal subunits or 70S ribosomes.

It localises to the cytoplasm. In terms of biological role, one of several proteins that assist in the late maturation steps of the functional core of the 30S ribosomal subunit. Associates with free 30S ribosomal subunits (but not with 30S subunits that are part of 70S ribosomes or polysomes). Required for efficient processing of 16S rRNA. May interact with the 5'-terminal helix region of 16S rRNA. The chain is Ribosome-binding factor A from Legionella pneumophila (strain Paris).